Here is a 177-residue protein sequence, read N- to C-terminus: Large ribosomal subunit protein uL6 (177 aa).

The protein belongs to the universal ribosomal protein uL6 family. In terms of assembly, part of the 50S ribosomal subunit.

Functionally, this protein binds to the 23S rRNA, and is important in its secondary structure. It is located near the subunit interface in the base of the L7/L12 stalk, and near the tRNA binding site of the peptidyltransferase center. The protein is Large ribosomal subunit protein uL6 of Pseudomonas entomophila (strain L48).